Consider the following 234-residue polypeptide: Lipoprotein-releasing system ATP-binding protein LolD (234 aa).

Residues 13–233 (IYLHEIKRQY…SLSDGQVVEL (221 aa)) form the ABC transporter domain. 49–56 (APSGSGKS) contacts ATP.

This sequence belongs to the ABC transporter superfamily. Lipoprotein translocase (TC 3.A.1.125) family. As to quaternary structure, the complex is composed of two ATP-binding proteins (LolD) and two transmembrane proteins (LolC and LolE).

It is found in the cell inner membrane. In terms of biological role, part of the ABC transporter complex LolCDE involved in the translocation of mature outer membrane-directed lipoproteins, from the inner membrane to the periplasmic chaperone, LolA. Responsible for the formation of the LolA-lipoprotein complex in an ATP-dependent manner. The sequence is that of Lipoprotein-releasing system ATP-binding protein LolD from Bradyrhizobium diazoefficiens (strain JCM 10833 / BCRC 13528 / IAM 13628 / NBRC 14792 / USDA 110).